An 858-amino-acid chain; its full sequence is Potassium transporter 7 (858 aa).

Composition is skewed to acidic residues over residues 1 to 16 (MAEESSMEGSEKEEID) and 38 to 53 (QDDDDSEIGVDDDNDG). The disordered stretch occupies residues 1–68 (MAEESSMEGS…LESDEDEIPE (68 aa)). Residues 1-104 (MAEESSMEGS…DYEDLTVGRK (104 aa)) lie on the Cytoplasmic side of the membrane. A helical membrane pass occupies residues 105–125 (VLLAFQTLGVVFGDVGTSPLY). The Extracellular portion of the chain corresponds to 126–147 (TFSVMFSKSPVQEKEDVIGALS). Residues 148–168 (LVLYTLLLVPLIKYVLVVLWA) traverse the membrane as a helical segment. Over 169–232 (NDDGEGGTFA…KLENSLILKK (64 aa)) the chain is Cytoplasmic. Residues 233–253 (ILLVLVLAGTSMVIADGVVTP) traverse the membrane as a helical segment. At 254–269 (AMSVMSAVGGLKVGVD) the chain is on the extracellular side. A helical transmembrane segment spans residues 270-290 (VVEQDQVVMISVAFLVILFSL). Topologically, residues 291–297 (QKYGTSK) are cytoplasmic. A helical membrane pass occupies residues 298–318 (MGLVVGPALLIWFCSLAGIGI). The Extracellular portion of the chain corresponds to 319-345 (YNLIKYDSSVYRAFNPVHIYYFFKRNS). Residues 346-366 (INAWYALGGCILCATGSEALF) form a helical membrane-spanning segment. Over 367–380 (ADLCYFSVRSVQLT) the chain is Cytoplasmic. A helical membrane pass occupies residues 381 to 401 (FVCLVLPCLMLGYMGQAAYLM). Over 402–413 (ENHADASQAFFS) the chain is Extracellular. Residues 414 to 434 (SVPGSAFWPVLFIANIAALIA) traverse the membrane as a helical segment. Over 435–470 (SRTMTTATFSCIKQSTALGCFPRLKIIHTSRKFMGQ) the chain is Cytoplasmic. A helical transmembrane segment spans residues 471–491 (IYIPVLNWFLLAVCLVVVCSI). The Extracellular segment spans residues 492-496 (SSIDE). A helical transmembrane segment spans residues 497–517 (IGNAYGMAELGVMMTTTILVT). A topological domain (cytoplasmic) is located at residue L518. Residues 519–539 (IMLLIWQINIVIVIAFLVVFL) traverse the membrane as a helical segment. The Extracellular segment spans residues 540–552 (GVELVFFSSVIAS). A helical membrane pass occupies residues 553-573 (VGDGSWIILVFAVIMFGIMYI). Over 574–858 (WNYGSKLRYE…LMQVGMTYMV (285 aa)) the chain is Cytoplasmic. The disordered stretch occupies residues 707–731 (QERSLESDGNDDSDSEEDFPGSRVV). A compositionally biased stretch (acidic residues) spans 714-725 (DGNDDSDSEEDF). 2 positions are modified to phosphoserine: S719 and S721.

The protein belongs to the HAK/KUP transporter (TC 2.A.72.3) family.

It localises to the cell membrane. Probable potassium transporter. This Arabidopsis thaliana (Mouse-ear cress) protein is Potassium transporter 7 (POT7).